The chain runs to 167 residues: Transcription factor HES-5 (167 aa).

The region spanning 16–72 (KNRLRKPVVEKMRRDRINSSIEQLKLLLEQEFARHQPNSKLEKADILEMAVSYLKHS) is the bHLH domain. Residues 88–119 (YSEGYSWCLQEAVQFLTLHAASDTQMKLLYHF) form the Orange domain. Pro residues predominate over residues 124–138 (APAAPAKEPPAPGAA). Positions 124–167 (APAAPAKEPPAPGAAPQPARSSAKAAAAAVSTSRQPACGLWRPW) are disordered. Low complexity predominate over residues 139-160 (PQPARSSAKAAAAAVSTSRQPA). Positions 164–167 (WRPW) match the WRPW motif motif.

As to quaternary structure, transcription repression requires formation of a complex with a corepressor protein of the Groucho/TLE family.

Its subcellular location is the nucleus. Functionally, transcriptional repressor of genes that require a bHLH protein for their transcription. Plays an important role as neurogenesis negative regulator. This Mus musculus (Mouse) protein is Transcription factor HES-5 (Hes5).